We begin with the raw amino-acid sequence, 718 residues long: Heat shock 70 kDa protein 6, chloroplastic (718 aa).

Residues 1 to 92 constitute a chloroplast transit peptide; sequence MASSAAQIHV…IDLGTTNSAV (92 aa). The disordered stretch occupies residues 671 to 718; it reads QSLYNQPGAGGPGAGPSPGGEGASSGDSSSSKGGDGDDVIDADFTDSQ. Residues 678–693 are compositionally biased toward gly residues; the sequence is GAGGPGAGPSPGGEGA. Residues 706–718 show a composition bias toward acidic residues; it reads GDDVIDADFTDSQ.

This sequence belongs to the heat shock protein 70 (TC 1.A.33) family. DnaK subfamily. Interacts with geminivirus movement protein (MP).

It is found in the plastid. The protein resides in the chloroplast stroma. Functionally, acts redundantly with HSP70-7 in the thermotolerance of germinating seeds. Plays an important role in the protein precursor import into chloroplasts. In cooperation with other chaperones, Hsp70s are key components that facilitate folding of de novo synthesized proteins, assist translocation of precursor proteins into organelles, and are responsible for degradation of damaged protein under stress conditions. In Arabidopsis thaliana (Mouse-ear cress), this protein is Heat shock 70 kDa protein 6, chloroplastic (HSP70-6).